Reading from the N-terminus, the 990-residue chain is Type III restriction-modification enzyme StyLTI Res subunit (990 aa).

The tract at residues 50–545 (NIDVKMETGT…GLRLPVDENG (496 aa)) is helicase-like domain. The region spanning 884–970 (LLKYDYPQQV…RQNINVEFAE (87 aa)) is the VRR-NUC domain. The interval 913 to 937 (STTPDFVYRIERQDADSVYLLVETK) is endonuclease domain.

This sequence belongs to the type III restriction-modification system Res protein family. Contains two different subunits: Res and Mod. Requires Mg(2+) as cofactor. The cofactor is S-adenosyl-L-methionine.

It catalyses the reaction Endonucleolytic cleavage of DNA to give specific double-stranded fragments with terminal 5'-phosphates.. Functionally, a type III restriction enzyme that recognizes 2 inversely oriented double-stranded sequences 5'-CAGAG-3' and cleaves DNA 25-27 base pairs downstream. After binding to one recognition site undergoes random one-dimensional diffusion along DNA until it collides with a stationary enzyme bound to the second DNA site, which is when DNA cleavage occurs. DNA restriction requires both the Res and Mod subunits. This Salmonella typhimurium (strain LT2 / SGSC1412 / ATCC 700720) protein is Type III restriction-modification enzyme StyLTI Res subunit.